Consider the following 731-residue polypeptide: 1,4-alpha-glucan branching enzyme GlgB (731 aa).

Catalysis depends on Asp-411, which acts as the Nucleophile. Glu-464 functions as the Proton donor in the catalytic mechanism.

Belongs to the glycosyl hydrolase 13 family. GlgB subfamily. In terms of assembly, monomer.

It carries out the reaction Transfers a segment of a (1-&gt;4)-alpha-D-glucan chain to a primary hydroxy group in a similar glucan chain.. The protein operates within glycan biosynthesis; glycogen biosynthesis. Catalyzes the formation of the alpha-1,6-glucosidic linkages in glycogen by scission of a 1,4-alpha-linked oligosaccharide from growing alpha-1,4-glucan chains and the subsequent attachment of the oligosaccharide to the alpha-1,6 position. In Mycobacterium tuberculosis (strain ATCC 25177 / H37Ra), this protein is 1,4-alpha-glucan branching enzyme GlgB.